We begin with the raw amino-acid sequence, 357 residues long: Histidinol-phosphate aminotransferase (357 aa).

Residue Lys-218 is modified to N6-(pyridoxal phosphate)lysine.

Belongs to the class-II pyridoxal-phosphate-dependent aminotransferase family. Histidinol-phosphate aminotransferase subfamily. In terms of assembly, homodimer. Pyridoxal 5'-phosphate is required as a cofactor.

It catalyses the reaction L-histidinol phosphate + 2-oxoglutarate = 3-(imidazol-4-yl)-2-oxopropyl phosphate + L-glutamate. Its pathway is amino-acid biosynthesis; L-histidine biosynthesis; L-histidine from 5-phospho-alpha-D-ribose 1-diphosphate: step 7/9. The protein is Histidinol-phosphate aminotransferase of Prosthecochloris aestuarii (strain DSM 271 / SK 413).